Here is a 426-residue protein sequence, read N- to C-terminus: Citrate transporter (426 aa).

12 consecutive transmembrane segments (helical) span residues 1-21, 22-42, 59-79, 86-106, 137-157, 176-196, 232-252, 278-298, 318-338, 343-363, 377-397, and 406-426; these read MLAI…MSNR, LSAL…SGFG, TGIM…SGLF, ILSF…VLTM, LVLA…PWGG, PLIP…YILG, LLTV…PVLF, AGNA…TGIL, AMGP…TFFM, FYFG…IDAA, LLSP…VSFG, and WAVG…IISF.

It belongs to the CitM (TC 2.A.11) transporter family.

Its subcellular location is the cell membrane. Transports the free citrate anion. Probably cotransports citrate and at least three or four protons. The citrate uptake is inhibited by the presence of magnesium ions. The chain is Citrate transporter (citN) from Bacillus subtilis (strain 168).